A 340-amino-acid polypeptide reads, in one-letter code: Anthranilate phosphoribosyltransferase (340 aa).

5-phospho-alpha-D-ribose 1-diphosphate is bound by residues Gly-79, 82 to 83 (GD), Thr-87, 89 to 92 (NIST), 107 to 115 (KHGNRAVTG), and Ser-119. An anthranilate-binding site is contributed by Gly-79. Residue Ser-91 participates in Mg(2+) binding. Asn-110 is a binding site for anthranilate. Arg-165 lines the anthranilate pocket. Residues Asp-224 and Glu-225 each contribute to the Mg(2+) site.

This sequence belongs to the anthranilate phosphoribosyltransferase family. Homodimer. Mg(2+) serves as cofactor.

The catalysed reaction is N-(5-phospho-beta-D-ribosyl)anthranilate + diphosphate = 5-phospho-alpha-D-ribose 1-diphosphate + anthranilate. It functions in the pathway amino-acid biosynthesis; L-tryptophan biosynthesis; L-tryptophan from chorismate: step 2/5. Catalyzes the transfer of the phosphoribosyl group of 5-phosphorylribose-1-pyrophosphate (PRPP) to anthranilate to yield N-(5'-phosphoribosyl)-anthranilate (PRA). The sequence is that of Anthranilate phosphoribosyltransferase from Syntrophomonas wolfei subsp. wolfei (strain DSM 2245B / Goettingen).